Here is a 490-residue protein sequence, read N- to C-terminus: Bifunctional protein HldE (490 aa).

Positions 1 to 328 (MFSFDALLQA…LRRRILPHAS (328 aa)) are ribokinase. An ATP-binding site is contributed by 205–208 (NRKE). D275 is an active-site residue. The interval 358-490 (FTNGCFDILH…LVARAREGQS (133 aa)) is cytidylyltransferase.

In the N-terminal section; belongs to the carbohydrate kinase PfkB family. The protein in the C-terminal section; belongs to the cytidylyltransferase family. As to quaternary structure, homodimer.

It catalyses the reaction D-glycero-beta-D-manno-heptose 7-phosphate + ATP = D-glycero-beta-D-manno-heptose 1,7-bisphosphate + ADP + H(+). The catalysed reaction is D-glycero-beta-D-manno-heptose 1-phosphate + ATP + H(+) = ADP-D-glycero-beta-D-manno-heptose + diphosphate. The protein operates within nucleotide-sugar biosynthesis; ADP-L-glycero-beta-D-manno-heptose biosynthesis; ADP-L-glycero-beta-D-manno-heptose from D-glycero-beta-D-manno-heptose 7-phosphate: step 1/4. It functions in the pathway nucleotide-sugar biosynthesis; ADP-L-glycero-beta-D-manno-heptose biosynthesis; ADP-L-glycero-beta-D-manno-heptose from D-glycero-beta-D-manno-heptose 7-phosphate: step 3/4. Its function is as follows. Catalyzes the phosphorylation of D-glycero-D-manno-heptose 7-phosphate at the C-1 position to selectively form D-glycero-beta-D-manno-heptose-1,7-bisphosphate. In terms of biological role, catalyzes the ADP transfer from ATP to D-glycero-beta-D-manno-heptose 1-phosphate, yielding ADP-D-glycero-beta-D-manno-heptose. This Rhodopseudomonas palustris (strain TIE-1) protein is Bifunctional protein HldE.